Reading from the N-terminus, the 835-residue chain is Lon protease (835 aa).

Positions 36 to 234 (VHVFPLLRRP…KALILLKKEL (199 aa)) constitute a Lon N-terminal domain. An ATP-binding site is contributed by 387-394 (GPPGVGKT). One can recognise a Lon proteolytic domain in the interval 646 to 828 (RTPVGVCMGL…DQVFKISFPN (183 aa)). Catalysis depends on residues Ser734 and Lys777.

This sequence belongs to the peptidase S16 family. In terms of assembly, homohexamer. Organized in a ring with a central cavity.

It localises to the cytoplasm. The catalysed reaction is Hydrolysis of proteins in presence of ATP.. In terms of biological role, ATP-dependent serine protease that mediates the selective degradation of mutant and abnormal proteins as well as certain short-lived regulatory proteins. Required for cellular homeostasis and for survival from DNA damage and developmental changes induced by stress. Degrades polypeptides processively to yield small peptide fragments that are 5 to 10 amino acids long. Binds to DNA in a double-stranded, site-specific manner. The polypeptide is Lon protease (Protochlamydia amoebophila (strain UWE25)).